A 608-amino-acid chain; its full sequence is MSQEGDYGRWTISSSDESEEEKPKPDKPSTSSLLCARQGAANEPRYTCSEAQKAAHKRKISPVKFSNTDSVLPPKRQKSGSQEDLGWCLSSSDDELQPEMPQKQAEKVVIKKEKDISAPNDGTAQRTENHGAPACHRLKEEEDEYETSGEGQDIWDMLDKGNPFQFYLTRVSGVKPKYNSGALHIKDILSPLFGTLVSSAQFNYCFDVDWLVKQYPPEFRKKPILLVHGDKREAKAHLHAQAKPYENISLCQAKLDIAFGTHHTKMMLLLYEEGLRVVIHTSNLIHADWHQKTQGIWLSPLYPRIADGTHKSGESPTHFKADLISYLMAYNAPSLKEWIDVIHKHDLSETNVYLIGSTPGRFQGSQKDNWGHFRLKKLLKDHASSMPNAESWPVVGQFSSVGSLGADESKWLCSEFKESMLTLGKESKTPGKSSVPLYLIYPSVENVRTSLEGYPAGGSLPYSIQTAEKQNWLHSYFHKWSAETSGRSNAMPHIKTYMRPSPDFSKIAWFLVTSANLSKAAWGALEKNGTQLMIRSYELGVLFLPSAFGLDSFKVKQKFFAGSQEPMATFPVPYDLPPELYGSKDRPWIWNIPYVKAPDTHGNMWVPS.

The disordered stretch occupies residues methionine 1–proline 101. Serine 61 bears the Phosphoserine mark. Threonine 147 is subject to Phosphothreonine. Phosphoserine is present on serine 148. Histidine 263 functions as the Nucleophile in the catalytic mechanism. Lysine 265 is a binding site for substrate. Positions serine 400–serine 403 are interaction with DNA. The Proton donor/acceptor role is filled by histidine 493. Lysine 495 is a binding site for substrate.

The protein belongs to the tyrosyl-DNA phosphodiesterase family. As to quaternary structure, monomer. Post-translationally, phosphorylated on serine and/or threonine residues, but not on tyrosine residues. As to expression, ubiquitously expressed. Similar expression throughout the central nervous system (whole brain, amygdala, caudate nucleus, cerebellum, cerebral cortex, frontal lobe, hippocampus, medulla oblongata, occipital lobe, putamen, substantia nigra, temporal lobe, thalamus, nucleus accumbens and spinal cord) and increased expression in testis and thymus.

The protein resides in the nucleus. It localises to the cytoplasm. DNA repair enzyme that can remove a variety of covalent adducts from DNA through hydrolysis of a 3'-phosphodiester bond, giving rise to DNA with a free 3' phosphate. Catalyzes the hydrolysis of dead-end complexes between DNA and the topoisomerase I active site tyrosine residue. Hydrolyzes 3'-phosphoglycolates on protruding 3' ends on DNA double-strand breaks due to DNA damage by radiation and free radicals. Acts on blunt-ended double-strand DNA breaks and on single-stranded DNA. Has low 3'exonuclease activity and can remove a single nucleoside from the 3'end of DNA and RNA molecules with 3'hydroxyl groups. Has no exonuclease activity towards DNA or RNA with a 3'phosphate. In Homo sapiens (Human), this protein is Tyrosyl-DNA phosphodiesterase 1 (TDP1).